Reading from the N-terminus, the 298-residue chain is Protoheme IX farnesyltransferase (298 aa).

Transmembrane regions (helical) follow at residues 16-36 (VVAL…PGMP), 45-65 (ALGF…NQLL), 97-117 (VLIV…TAVL), 141-161 (IVIG…AVTG), 172-192 (SLLV…LAIF), 223-243 (VLLA…VFYL), 244-264 (GGAV…LDPP), and 277-297 (VVYL…LPWV).

This sequence belongs to the UbiA prenyltransferase family. Protoheme IX farnesyltransferase subfamily.

It localises to the cell inner membrane. The enzyme catalyses heme b + (2E,6E)-farnesyl diphosphate + H2O = Fe(II)-heme o + diphosphate. It participates in porphyrin-containing compound metabolism; heme O biosynthesis; heme O from protoheme: step 1/1. Converts heme B (protoheme IX) to heme O by substitution of the vinyl group on carbon 2 of heme B porphyrin ring with a hydroxyethyl farnesyl side group. The chain is Protoheme IX farnesyltransferase from Xanthomonas campestris pv. campestris (strain 8004).